Consider the following 304-residue polypeptide: MDGNVQEELELEKSIRRFREKFHGKVTLETAVALMRRFTNNHDQVCKYIILCMDNDTDLDVRNDLRNDPVARNVINKIKSDDQKAKEMPKDKDIKDLAKRMNTLPLTEKNLKMFNDAAENRIPSRDRQFACKECDFVWWRRVPQRKEVSRCHRCRKKFDPVPENKMWGIAEYHCPVCRRMFRGFGQIEVSSPCYVCRNPVLPSCILPPRRNQGPRTRNTHSCLAENCYNRRVPFVAGLQCAHPKSRIMNQLPKVLHPSEPHISTGSTIATCLSQGSLTENDIDDIILDDIKEEEEDEGSDDSDG.

Positions 140–156 match the Nuclear localization signal motif; that stretch reads RRVPQRKEVSRCHRCRK. Residues 278-287 carry the Nuclear export signal motif; the sequence is TENDIDDIIL.

This sequence belongs to the SHFL family.

The protein resides in the cytoplasm. It localises to the nucleus. Its subcellular location is the P-body. Inhibits programmed -1 ribosomal frameshifting (-1PRF) of a variety of mRNAs from viruses and cellular genes. Interacts with the -1PRF signal of target mRNA and translating ribosomes and causes premature translation termination at the frameshifting site. May exhibit antiviral activity. This Xenopus tropicalis (Western clawed frog) protein is Shiftless antiviral inhibitor of ribosomal frameshifting protein homolog (shfl).